Reading from the N-terminus, the 450-residue chain is MSSRYRVEYHLKSHRKDEFIDWVKGLLASPFVLHAVSHEGDYNDDLATTQRVRSQYADIFKDIEGLIKDKIEFDSRNMSQDEIEDGASSQSLNILGQSRLNLLVPSIGTFFTELPLEQAFLWEDSQRAISARRMVAPSFNDIRHILNTAQIFHFKKQENLHNGKVLRLVTFDGDVTLYEDGGSLVYTNPVIPYILKLLRCGINVGIVTAAGYDEAGTYENRLKGLIVALHDSTDIPVSQKQNLTIMGGESSYLFRYYEDPEEDNFGFRQIDKEEWLLPRMKAWSLEDVEKTLDFAERTLNRLRKRLNLPSEISIIRKVRAVGIVPGERYDEASKRQVPVKLDREQLEEIVLTLQNTLESFAPSRRIQFSCFDGGSDVWCDIGGKDLGVRSLQQFYNPESPIQPSETLHVGDQFAPVGSANDFKARLAGCTLWIASPQETVNYLHRLLETD.

H144 is an ATP binding site. Residue D172 is the Nucleophile of the active site. Residues D172, D174, D180, T208, D376, and K384 each coordinate IMP. D172 and D174 together coordinate Mg(2+). The active-site Proton donor is the D174. Mg(2+) is bound at residue D411.

This sequence belongs to the ISN1 family. In terms of assembly, homotetramer. It depends on Mg(2+) as a cofactor.

It catalyses the reaction IMP + H2O = inosine + phosphate. With respect to regulation, allosterically activated by ATP. ATP binding is a prerequisite to magnesium and substrate binding. ATP binds to 2 of the subunits in the homotetramer inducing a closure of these 2 subunits and the release of the C-terminal loop, thereby activating the enzyme. Its function is as follows. IMP-specific 5'-nucleotidase involved in IMP (inosine 5'-phosphate) degradation. The polypeptide is IMP-specific 5'-nucleotidase 1 (ISN1) (Saccharomyces cerevisiae (strain ATCC 204508 / S288c) (Baker's yeast)).